Here is a 265-residue protein sequence, read N- to C-terminus: Type III pantothenate kinase (265 aa).

Residue 6-13 participates in ATP binding; it reads DVGNTHTV. Residue 112–115 participates in substrate binding; sequence GADR. Asp114 serves as the catalytic Proton acceptor. Asp134 serves as a coordination point for K(+). An ATP-binding site is contributed by Thr137. Residue Thr189 participates in substrate binding.

This sequence belongs to the type III pantothenate kinase family. In terms of assembly, homodimer. The cofactor is NH4(+). It depends on K(+) as a cofactor.

The protein localises to the cytoplasm. The enzyme catalyses (R)-pantothenate + ATP = (R)-4'-phosphopantothenate + ADP + H(+). It participates in cofactor biosynthesis; coenzyme A biosynthesis; CoA from (R)-pantothenate: step 1/5. In terms of biological role, catalyzes the phosphorylation of pantothenate (Pan), the first step in CoA biosynthesis. In Streptomyces coelicolor (strain ATCC BAA-471 / A3(2) / M145), this protein is Type III pantothenate kinase.